Reading from the N-terminus, the 190-residue chain is MNMSATLILAFGMSMDAFAASIGKGAVLHNPRFRDAIRTGLIFGVIEAITPLIGWALGFFASQYILEWDHWVAFTLLLILGGRMVVEGFKGSSDCRCEKVKNHSLALLVCTAIATSLDAMAIGVGLAFLQVNILHTAMVIGCATMIMVTLGMMIGRYIGPILGKKAEVMGGLVLIGIGCNILYEHLGYAA.

The next 6 membrane-spanning stretches (helical) occupy residues 3 to 23 (MSAT…ASIG), 41 to 61 (LIFG…GFFA), 62 to 82 (SQYI…ILGG), 105 to 127 (LALL…VGLA), 143 to 163 (ATMI…PILG), and 168 to 188 (VMGG…HLGY).

The protein belongs to the MntP (TC 9.B.29) family.

The protein localises to the cell inner membrane. In terms of biological role, probably functions as a manganese efflux pump. This Pectobacterium carotovorum subsp. carotovorum (strain PC1) protein is Putative manganese efflux pump MntP.